Reading from the N-terminus, the 242-residue chain is MAGHSKWANIQHKKARQDAKRGKIFTRLIKEITVAARMGGGDPGSNPRLRLALEKAAENNMPKDNVQRAIDKGTGNLEGVEYIELRYEGYGIGGAALMVDCLTDNKTRTVADVRHAFTKNGGNLGTDGCVAFNFVHQGYLVFEPGVDEDALMEAALEAGAEDVVTNDDGSIEVITAPNDWAGVKSALEAAGYKSVDGDVTMRAQNETELSGDDAVKMQKLIDALEDLDDVQDVYTSAVLNLD.

The protein belongs to the TACO1 family.

The protein localises to the cytoplasm. This Neisseria meningitidis serogroup B (strain ATCC BAA-335 / MC58) protein is Probable transcriptional regulatory protein NMB1648.